Reading from the N-terminus, the 360-residue chain is Peptide chain release factor 1 (360 aa).

Q235 carries the N5-methylglutamine modification. Residues 284-312 (AKRQQAEASTRRNLLGSGDRSDRNRTYNF) form a disordered region.

The protein belongs to the prokaryotic/mitochondrial release factor family. In terms of processing, methylated by PrmC. Methylation increases the termination efficiency of RF1.

It is found in the cytoplasm. Its function is as follows. Peptide chain release factor 1 directs the termination of translation in response to the peptide chain termination codons UAG and UAA. In Escherichia coli O81 (strain ED1a), this protein is Peptide chain release factor 1.